A 308-amino-acid polypeptide reads, in one-letter code: Quinolinate synthase (308 aa).

2 residues coordinate iminosuccinate: histidine 24 and serine 41. Cysteine 86 serves as a coordination point for [4Fe-4S] cluster. Residues 112–114 and serine 129 each bind iminosuccinate; that span reads YIN. Cysteine 172 serves as a coordination point for [4Fe-4S] cluster. Residues 198 to 200 and threonine 215 each bind iminosuccinate; that span reads HPE. Cysteine 265 is a [4Fe-4S] cluster binding site.

Belongs to the quinolinate synthase family. Type 2 subfamily. Requires [4Fe-4S] cluster as cofactor.

The protein localises to the cytoplasm. It catalyses the reaction iminosuccinate + dihydroxyacetone phosphate = quinolinate + phosphate + 2 H2O + H(+). It functions in the pathway cofactor biosynthesis; NAD(+) biosynthesis; quinolinate from iminoaspartate: step 1/1. In terms of biological role, catalyzes the condensation of iminoaspartate with dihydroxyacetone phosphate to form quinolinate. This chain is Quinolinate synthase, found in Sulfurihydrogenibium sp. (strain YO3AOP1).